A 121-amino-acid polypeptide reads, in one-letter code: Large ribosomal subunit protein eL18 (121 aa).

The protein belongs to the eukaryotic ribosomal protein eL18 family.

The chain is Large ribosomal subunit protein eL18 from Methanosphaerula palustris (strain ATCC BAA-1556 / DSM 19958 / E1-9c).